The primary structure comprises 97 residues: Defensin-like protein 301 (97 aa).

Residues M1 to G24 form the signal peptide. 6 cysteine pairs are disulfide-bonded: C28-C47, C34-C53, C39-C55, C65-C84, C71-C92, and C76-C94.

Belongs to the DEFL family.

The protein resides in the secreted. The protein is Defensin-like protein 301 of Arabidopsis thaliana (Mouse-ear cress).